The chain runs to 350 residues: MRVTNRSLKGREGEIAVTAETLDDLWHLKYIIEKGDLVFSVTKRKADSASDKIRPEKVEKVKVRLGIRVDDLEFHKFANRLRLHGMIERGMDVGSYHTLNIEIGTNLSVIKEHWKNDQLQRIKDAEEASKRPKVVMVAIEEGDADIGFVHHYGIEIYSHIRQSSGKRETGLRNEFFREVVEQLRHAVPEEASIVIAGPGFTKEDFIKYFQETEPAMASKALIEDTSMIGMSGFQEVLRRGAVDRIMQESRIARESALMEDLIREISMDGKAAYGLGDVKNALNFGAVETLLVADETLREGREKGEDIDKLLREVEQAQGKVVVFSTAFEPGEKLHKLGGIAALLRFKVRG.

Belongs to the eukaryotic release factor 1 family. Pelota subfamily. In terms of assembly, monomer. A divalent metal cation is required as a cofactor.

Its subcellular location is the cytoplasm. In terms of biological role, may function in recognizing stalled ribosomes, interact with stem-loop structures in stalled mRNA molecules, and effect endonucleolytic cleavage of the mRNA. May play a role in the release non-functional ribosomes and degradation of damaged mRNAs. Has endoribonuclease activity. The sequence is that of Protein pelota homolog from Methanosarcina barkeri (strain Fusaro / DSM 804).